We begin with the raw amino-acid sequence, 533 residues long: Glucosidase 2 subunit beta (533 aa).

The signal sequence occupies residues 1–13; that stretch reads MLLLLLLLPMCWA. S23 carries the phosphoserine modification. LDL-receptor class A domains are found at residues 36 to 70 and 71 to 112; these read FTCL…AACP and NGSF…IVCE. Disulfide bonds link C38/C57 and C55/C69. D48 is a substrate binding site. Residues Q49, D52, Y54, D56, D62, and E63 each coordinate Ca(2+). A substrate-binding site is contributed by D52. A glycan (N-linked (GlcNAc...) asparagine) is linked at N71. Cystine bridges form between C76-C98, C96-C111, and C99-C115. A Phosphoserine; by PKC modification is found at S88. D93, V95, D97, D103, and E104 together coordinate Ca(2+). Residue K165 is modified to N6-succinyllysine. The residue at position 167 (S167) is a Phosphoserine. EF-hand domains follow at residues 208–243 and 244–279; these read RERE…DTDG and DGAL…RDKY. Ca(2+)-binding residues include D221, D223, D225, and E232. The disordered stretch occupies residues 284–363; that stretch reads LPTEYPPSPP…SPTEEDRMPP (80 aa). The span at 312-336 shows a compositional bias: acidic residues; it reads TEEEDEDEEDEETEEDEDEEDEDSQ. A phosphoserine; by PKC mark is found at S388 and S395. The MRH domain maps to 418 to 519; it reads SQCYELTTNE…ELMTPAACPE (102 aa). C420 and C433 are oxidised to a cystine. S439 carries the post-translational modification Phosphoserine; by PKC. 2 disulfide bridges follow: C476–C505 and C490–C517. N481 carries an N-linked (GlcNAc...) asparagine glycan. Positions 530 to 533 match the Prevents secretion from ER motif; the sequence is HDEL.

As to quaternary structure, heterodimer of a catalytic alpha subunit (GANAB) and a beta subunit (PRKCSH). Binds glycosylated PTPRC. Ubiquitous. Highly expressed in liver, spleen, lung, duodenum, stomach, adrenal gland, pituitary, testis, corpus luteum, uterus and fetal ovary.

It localises to the endoplasmic reticulum. It participates in glycan metabolism; N-glycan metabolism. Regulatory subunit of glucosidase II that cleaves sequentially the 2 innermost alpha-1,3-linked glucose residues from the Glc(2)Man(9)GlcNAc(2) oligosaccharide precursor of immature glycoproteins. Required for efficient PKD1/Polycystin-1 biogenesis and trafficking to the plasma membrane of the primary cilia. The chain is Glucosidase 2 subunit beta (PRKCSH) from Bos taurus (Bovine).